A 374-amino-acid polypeptide reads, in one-letter code: Phosphate acyltransferase (374 aa).

This sequence belongs to the PlsX family. In terms of assembly, homodimer. Probably interacts with PlsY.

It is found in the cytoplasm. The catalysed reaction is a fatty acyl-[ACP] + phosphate = an acyl phosphate + holo-[ACP]. The protein operates within lipid metabolism; phospholipid metabolism. Functionally, catalyzes the reversible formation of acyl-phosphate (acyl-PO(4)) from acyl-[acyl-carrier-protein] (acyl-ACP). This enzyme utilizes acyl-ACP as fatty acyl donor, but not acyl-CoA. This Gluconacetobacter diazotrophicus (strain ATCC 49037 / DSM 5601 / CCUG 37298 / CIP 103539 / LMG 7603 / PAl5) protein is Phosphate acyltransferase.